The primary structure comprises 1172 residues: DNA-directed RNA polymerase subunit beta (1172 aa).

Belongs to the RNA polymerase beta chain family. In terms of assembly, the RNAP catalytic core consists of 2 alpha, 1 beta, 1 beta' and 1 omega subunit. When a sigma factor is associated with the core the holoenzyme is formed, which can initiate transcription.

It carries out the reaction RNA(n) + a ribonucleoside 5'-triphosphate = RNA(n+1) + diphosphate. In terms of biological role, DNA-dependent RNA polymerase catalyzes the transcription of DNA into RNA using the four ribonucleoside triphosphates as substrates. The polypeptide is DNA-directed RNA polymerase subunit beta (Pseudothermotoga lettingae (strain ATCC BAA-301 / DSM 14385 / NBRC 107922 / TMO) (Thermotoga lettingae)).